The primary structure comprises 262 residues: Inner membrane protein YcfZ (262 aa).

Residues 1–4 lie on the Cytoplasmic side of the membrane; sequence MKKF. Residues 5 to 27 traverse the membrane as a helical segment; sequence IILLSLLILLPLTAASKPLIPIM. Residues 28–182 lie on the Periplasmic side of the membrane; it reads KTLFTDVTGT…HENAPPGSTN (155 aa). Residues 183–202 traverse the membrane as a helical segment; that stretch reads TLGFIAWAATFILFSRIFYY. Residues 203–206 lie on the Cytoplasmic side of the membrane; sequence TTRF. The helical transmembrane segment at 207-229 threads the bilayer; that stretch reads IYALKFAVAMTIANMGYQALCLY. Over 230–238 the chain is Periplasmic; the sequence is IDNSFAITR. Residues 239-258 form a helical membrane-spanning segment; sequence ISPLWAGLIGVCTFIAALLL. Residues 259–262 lie on the Cytoplasmic side of the membrane; sequence TSKR.

It is found in the cell inner membrane. This chain is Inner membrane protein YcfZ (ycfZ), found in Escherichia coli (strain K12).